Reading from the N-terminus, the 1279-residue chain is ATP-dependent helicase/nuclease subunit A (1279 aa).

In terms of domain architecture, UvrD-like helicase ATP-binding spans 4–499 (TKWTDEQRQA…VKLFKNFRSR (496 aa)). Residue 25-32 (AGAGAGKT) coordinates ATP. Residues 526–853 (EEALKVGASY…RIMSIHKSKG (328 aa)) enclose the UvrD-like helicase C-terminal domain.

This sequence belongs to the helicase family. AddA subfamily. Heterodimer of AddA and AddB/RexB. It depends on Mg(2+) as a cofactor.

It catalyses the reaction Couples ATP hydrolysis with the unwinding of duplex DNA by translocating in the 3'-5' direction.. The catalysed reaction is ATP + H2O = ADP + phosphate + H(+). In terms of biological role, the heterodimer acts as both an ATP-dependent DNA helicase and an ATP-dependent, dual-direction single-stranded exonuclease. Recognizes the chi site generating a DNA molecule suitable for the initiation of homologous recombination. The AddA nuclease domain is required for chi fragment generation; this subunit has the helicase and 3' -&gt; 5' nuclease activities. This chain is ATP-dependent helicase/nuclease subunit A, found in Clostridium botulinum (strain 657 / Type Ba4).